A 275-amino-acid polypeptide reads, in one-letter code: Elongation factor Ts (275 aa).

The interval 76–79 (TDFV) is involved in Mg(2+) ion dislocation from EF-Tu.

The protein belongs to the EF-Ts family.

It is found in the cytoplasm. Associates with the EF-Tu.GDP complex and induces the exchange of GDP to GTP. It remains bound to the aminoacyl-tRNA.EF-Tu.GTP complex up to the GTP hydrolysis stage on the ribosome. In Mycobacterium avium (strain 104), this protein is Elongation factor Ts.